The sequence spans 594 residues: DNA polymerase II small subunit (594 aa).

This sequence belongs to the DNA polymerase delta/II small subunit family. As to quaternary structure, heterodimer of a large subunit and a small subunit.

It catalyses the reaction DNA(n) + a 2'-deoxyribonucleoside 5'-triphosphate = DNA(n+1) + diphosphate. The catalysed reaction is Exonucleolytic cleavage in the 3'- to 5'-direction to yield nucleoside 5'-phosphates.. Functionally, possesses two activities: a DNA synthesis (polymerase) and an exonucleolytic activity that degrades single-stranded DNA in the 3' to 5' direction. Has a template-primer preference which is characteristic of a replicative DNA polymerase. The protein is DNA polymerase II small subunit (polB) of Methanocaldococcus jannaschii (strain ATCC 43067 / DSM 2661 / JAL-1 / JCM 10045 / NBRC 100440) (Methanococcus jannaschii).